An 876-amino-acid polypeptide reads, in one-letter code: Alanine--tRNA ligase (876 aa).

Zn(2+) contacts are provided by H565, H569, C667, and H671.

Belongs to the class-II aminoacyl-tRNA synthetase family. The cofactor is Zn(2+).

It is found in the cytoplasm. It catalyses the reaction tRNA(Ala) + L-alanine + ATP = L-alanyl-tRNA(Ala) + AMP + diphosphate. Its function is as follows. Catalyzes the attachment of alanine to tRNA(Ala) in a two-step reaction: alanine is first activated by ATP to form Ala-AMP and then transferred to the acceptor end of tRNA(Ala). Also edits incorrectly charged Ser-tRNA(Ala) and Gly-tRNA(Ala) via its editing domain. The chain is Alanine--tRNA ligase from Staphylococcus aureus (strain MSSA476).